We begin with the raw amino-acid sequence, 338 residues long: MSRPSLTRFLIEEQHAGRIDPELRQLITIVSRACKRISIAVSKGALGGVLGDAGTGNVQGEAQKKLDVLSNDILLEANAWGGHLAACASEEMDHSQPVPDQYPSGDFLLLFDPLDGSSNIDVNVSVGTIFSVLRAPKGTEKPGDEHFLQPGTQQVAAGYCIYGPSTMLVLTLGHGTHAFTLEREEGSFLLTQADMRVPEDTAEFAINMSNQRHWEPAMQAYVGDLLAGKDGARGKDFNMRWIASMVADVHRILTRGGIFIYPWDKKDAAKPGKLRLMYEANPMGMLVEQAGGAATTGRERILDIQPTQLHQRVPVFLGSKNEVAEATRYHVEFDKAQG.

Residues glutamate 90, aspartate 112, leucine 114, and aspartate 115 each contribute to the Mg(2+) site. Substrate-binding positions include aspartate 115 to serine 118, asparagine 207, and lysine 273. Glutamate 279 contacts Mg(2+).

Belongs to the FBPase class 1 family. In terms of assembly, homotetramer. Mg(2+) serves as cofactor.

The protein localises to the cytoplasm. The catalysed reaction is beta-D-fructose 1,6-bisphosphate + H2O = beta-D-fructose 6-phosphate + phosphate. It participates in carbohydrate biosynthesis; gluconeogenesis. The sequence is that of Fructose-1,6-bisphosphatase class 1 from Xanthomonas campestris pv. campestris (strain 8004).